Reading from the N-terminus, the 343-residue chain is 4-hydroxyproline 2-epimerase 1 (343 aa).

Ser90 functions as the Proton acceptor in the catalytic mechanism. Substrate-binding positions include 91 to 92, Asp251, and 256 to 257; these read GS and GT.

This sequence belongs to the proline racemase family.

The catalysed reaction is trans-4-hydroxy-L-proline = cis-4-hydroxy-D-proline. Functionally, catalyzes the epimerization of trans-4-hydroxy-L-proline (t4LHyp) to cis-4-hydroxy-D-proline (c4DHyp) in vitro, albeit with low efficiency. The physiological substrate may be different. Displays no proline racemase activity. The sequence is that of 4-hydroxyproline 2-epimerase 1 from Brucella anthropi (strain ATCC 49188 / DSM 6882 / CCUG 24695 / JCM 21032 / LMG 3331 / NBRC 15819 / NCTC 12168 / Alc 37) (Ochrobactrum anthropi).